Reading from the N-terminus, the 461-residue chain is Argininosuccinate lyase (461 aa).

The protein belongs to the lyase 1 family. Argininosuccinate lyase subfamily.

It localises to the cytoplasm. It catalyses the reaction 2-(N(omega)-L-arginino)succinate = fumarate + L-arginine. It functions in the pathway amino-acid biosynthesis; L-arginine biosynthesis; L-arginine from L-ornithine and carbamoyl phosphate: step 3/3. This chain is Argininosuccinate lyase, found in Symbiobacterium thermophilum (strain DSM 24528 / JCM 14929 / IAM 14863 / T).